The primary structure comprises 347 residues: DNA-directed RNA polymerase subunit alpha (347 aa).

The tract at residues 1-226 (MLISQRPTLS…ELFGLARELN (226 aa)) is alpha N-terminal domain (alpha-NTD). The interval 243-347 (HIASFALPID…EQDYAETEQL (105 aa)) is alpha C-terminal domain (alpha-CTD).

The protein belongs to the RNA polymerase alpha chain family. In terms of assembly, homodimer. The RNAP catalytic core consists of 2 alpha, 1 beta, 1 beta' and 1 omega subunit. When a sigma factor is associated with the core the holoenzyme is formed, which can initiate transcription.

The enzyme catalyses RNA(n) + a ribonucleoside 5'-triphosphate = RNA(n+1) + diphosphate. In terms of biological role, DNA-dependent RNA polymerase catalyzes the transcription of DNA into RNA using the four ribonucleoside triphosphates as substrates. In Mycobacterium bovis (strain ATCC BAA-935 / AF2122/97), this protein is DNA-directed RNA polymerase subunit alpha.